A 168-amino-acid chain; its full sequence is MAATAAASVAAISPLPGASLPRPVSARVPLLPRASPPTWRLSVGSARARSTRCLAAAGGGGLAPEMRATLDKVVGSHKVVLFMKGTKDFPQCGFSHTVVQILRSLDVPFETLDVLANEALRQGLKEYSSWPTFPQLYIDGEFFGGCDITVDAYKSGELQETLEKAMLS.

A chloroplast-targeting transit peptide spans 1-54 (MAATAAASVAAISPLPGASLPRPVSARVPLLPRASPPTWRLSVGSARARSTRCL). Positions 67–168 (RATLDKVVGS…QETLEKAMLS (102 aa)) constitute a Glutaredoxin domain. Residue K84 coordinates glutathione. Position 92 (C92) interacts with [2Fe-2S] cluster. Residues R121, F133, and 146–147 (CD) each bind glutathione.

This sequence belongs to the glutaredoxin family. CGFS subfamily.

It is found in the plastid. It localises to the chloroplast. Functionally, may only reduce GSH-thiol disulfides, but not protein disulfides. The protein is Monothiol glutaredoxin-S7, chloroplastic (GRXS7) of Oryza sativa subsp. japonica (Rice).